A 250-amino-acid polypeptide reads, in one-letter code: Cobalt transport protein CbiM (250 aa).

The signal sequence occupies residues 1 to 24; it reads MKYWGTALLGAFCVFFFTPNTAYA. The next 6 membrane-spanning stretches (helical) occupy residues 32–52, 67–87, 99–119, 122–142, 161–181, and 203–223; these read LPAGWCLFWLALSVPFVFWGI, MLLGLAGAFVFVLSALKIPSV, LGAILFGPAVMSVLGCIVLLF, LLLAHGGITTLGANVFSMGVM, VAVFLAASLGNMTTYMVTSLQ, and IFAITQIPLAITEGLLTVFVF.

Belongs to the CbiM family. In terms of assembly, forms an energy-coupling factor (ECF) transporter complex composed of an ATP-binding protein (A component, CbiO), a transmembrane protein (T component, CbiQ) and 2 possible substrate-capture proteins (S components, CbiM and CbiN) of unknown stoichimetry.

It localises to the cell membrane. Its pathway is cofactor biosynthesis; adenosylcobalamin biosynthesis. In terms of biological role, part of the energy-coupling factor (ECF) transporter complex CbiMNOQ involved in cobalt import. In Desulforamulus reducens (strain ATCC BAA-1160 / DSM 100696 / MI-1) (Desulfotomaculum reducens), this protein is Cobalt transport protein CbiM.